The sequence spans 254 residues: 5-oxoprolinase subunit A (254 aa).

Belongs to the LamB/PxpA family. Forms a complex composed of PxpA, PxpB and PxpC.

The enzyme catalyses 5-oxo-L-proline + ATP + 2 H2O = L-glutamate + ADP + phosphate + H(+). In terms of biological role, catalyzes the cleavage of 5-oxoproline to form L-glutamate coupled to the hydrolysis of ATP to ADP and inorganic phosphate. The chain is 5-oxoprolinase subunit A from Burkholderia orbicola (strain MC0-3).